Consider the following 74-residue polypeptide: Anionic peptide clone 10 (74 aa).

The first 24 residues, 1–24 (MVSKSLIVLLLVSVLVSTFFTTEA), serve as a signal peptide directing secretion.

The protein belongs to the non-disulfide-bridged peptide (NDBP) superfamily. Long chain multifunctional peptide (group 2) family. As to expression, expressed by the venom gland.

The protein localises to the secreted. In terms of biological role, may be an antimicrobial peptide. This chain is Anionic peptide clone 10, found in Tityus costatus (Brazilian scorpion).